A 2566-amino-acid polypeptide reads, in one-letter code: Highly reducing polyketide synthase verA (2566 aa).

Residues 3–440 enclose the Ketosynthase family 3 (KS3) domain; that stretch reads PEPIAIIGTG…GTNAHAILES (438 aa). A disordered region spans residues 35–61; sequence VASEPPSTRFDNRSFYDPDPSHPGTTN. The segment covering 44–54 has biased composition (basic and acidic residues); the sequence is FDNRSFYDPDP. Catalysis depends on for beta-ketoacyl synthase activity residues C176, H316, and H360. The tract at residues 554–880 is malonyl-CoA:ACP transacylase (MAT) domain; it reads IFTGQGAQWP…IGLSNRGASG (327 aa). S648 serves as the catalytic For malonyltransferase activity. The segment at 950–1081 is N-terminal hotdog fold; that stretch reads HPLLGSLEAD…GKLLICWGNP (132 aa). The interval 950–1246 is dehydratase (DH) domain; sequence HPLLGSLEAD…EGVHISPLGP (297 aa). The 301-residue stretch at 950-1250 folds into the PKS/mFAS DH domain; the sequence is HPLLGSLEAD…ISPLGPPDRQ (301 aa). The active-site Proton acceptor; for dehydratase activity is the H982. Residues 1096–1250 are C-terminal hotdog fold; that stretch reads AGAVDIKDFY…ISPLGPPDRQ (155 aa). The active-site Proton donor; for dehydratase activity is the D1156. The methyltransferase (CMet) domain stretch occupies residues 1386-1581; sequence DVLSRFYKED…TGFGGIDTIT (196 aa). Positions 2127–2294 are ketoreductase (KR) domain; that stretch reads KTYLLVGMTG…RRARNIVGSI (168 aa). The Carrier domain maps to 2411–2489; sequence EAAEIVAAGL…ALTADSVSKL (79 aa). S2449 is subject to O-(pantetheine 4'-phosphoryl)serine. The interval 2505-2540 is disordered; it reads KDVSGLTSPPEVPSDASRSSVSSGMDEIVTPESPSF. Residues 2518-2527 show a composition bias toward low complexity; it reads SDASRSSVSS.

Pantetheine 4'-phosphate serves as cofactor.

The protein operates within secondary metabolite biosynthesis; terpenoid biosynthesis. It participates in mycotoxin biosynthesis. Functionally, highly reducing polyketide synthase (HR-PKS); part of the gene cluster that mediates the biosynthesis of the neurotoxin verrucosidin, a methylated alpha-pyrone polyketide that inhibits oxidative phosphorylation in mitochondria and thereby causes neurological diseases. The carbon backbone of verrucosidin is synthesized by the HR-PKS verA, and further modified by the other verrucodidin cluster enzymes. This Penicillium polonicum protein is Highly reducing polyketide synthase verA.